We begin with the raw amino-acid sequence, 327 residues long: Ubiquinone biosynthesis O-methyltransferase, mitochondrial (327 aa).

Positions 79, 142, 165, and 210 each coordinate S-adenosyl-L-methionine. Mg(2+)-binding residues include Glu-211, Glu-214, and His-215.

This sequence belongs to the class I-like SAM-binding methyltransferase superfamily. UbiG/COQ3 family. Component of a multi-subunit COQ enzyme complex, composed of at least COQ3, COQ4, COQ5, COQ6, COQ7 and COQ9. The cofactor is Mg(2+).

The protein localises to the mitochondrion inner membrane. The enzyme catalyses a 3,4-dihydroxy-5-(all-trans-polyprenyl)benzoate + S-adenosyl-L-methionine = a 4-hydroxy-3-methoxy-5-(all-trans-polyprenyl)benzoate + S-adenosyl-L-homocysteine + H(+). It catalyses the reaction a 3-demethylubiquinone + S-adenosyl-L-methionine = a ubiquinone + S-adenosyl-L-homocysteine. It carries out the reaction a 3-demethylubiquinol + S-adenosyl-L-methionine = a ubiquinol + S-adenosyl-L-homocysteine + H(+). Its pathway is cofactor biosynthesis; ubiquinone biosynthesis. Functionally, O-methyltransferase required for two non-consecutive steps during ubiquinone biosynthesis. Catalyzes the 2 O-methylation of 3,4-dihydroxy-5-(all-trans-polyprenyl)benzoic acid into 4-hydroxy-3-methoxy-5-(all-trans-polyprenyl)benzoic acid. Also catalyzes the last step of ubiquinone biosynthesis by mediating methylation of 3-demethylubiquinone into ubiquinone. Also able to mediate the methylation of 3-demethylubiquinol into ubiquinol. The chain is Ubiquinone biosynthesis O-methyltransferase, mitochondrial from Candida albicans (Yeast).